Here is a 402-residue protein sequence, read N- to C-terminus: Enoyl-[acyl-carrier-protein] reductase [NADH] (402 aa).

NAD(+)-binding positions include 48-53 (GASSGY), 74-75 (FE), 111-112 (DA), and 140-141 (LA). Y226 serves as a coordination point for substrate. Y236 serves as the catalytic Proton donor. NAD(+)-binding positions include K245 and 274–276 (VVT).

This sequence belongs to the TER reductase family. As to quaternary structure, monomer.

It carries out the reaction a 2,3-saturated acyl-[ACP] + NAD(+) = a (2E)-enoyl-[ACP] + NADH + H(+). The protein operates within lipid metabolism; fatty acid biosynthesis. Functionally, involved in the final reduction of the elongation cycle of fatty acid synthesis (FAS II). Catalyzes the reduction of a carbon-carbon double bond in an enoyl moiety that is covalently linked to an acyl carrier protein (ACP). The polypeptide is Enoyl-[acyl-carrier-protein] reductase [NADH] (Xanthomonas axonopodis pv. citri (strain 306)).